A 232-amino-acid chain; its full sequence is tRNA1(Val) (adenine(37)-N6)-methyltransferase (232 aa).

Belongs to the methyltransferase superfamily. tRNA (adenine-N(6)-)-methyltransferase family.

The protein localises to the cytoplasm. It catalyses the reaction adenosine(37) in tRNA1(Val) + S-adenosyl-L-methionine = N(6)-methyladenosine(37) in tRNA1(Val) + S-adenosyl-L-homocysteine + H(+). Functionally, specifically methylates the adenine in position 37 of tRNA(1)(Val) (anticodon cmo5UAC). The protein is tRNA1(Val) (adenine(37)-N6)-methyltransferase of Haemophilus influenzae (strain ATCC 51907 / DSM 11121 / KW20 / Rd).